The sequence spans 457 residues: Phosphoglucosamine mutase (457 aa).

The active-site Phosphoserine intermediate is Ser-109. 4 residues coordinate Mg(2+): Ser-109, Asp-251, Asp-253, and Asp-255. Ser-109 bears the Phosphoserine mark.

Belongs to the phosphohexose mutase family. It depends on Mg(2+) as a cofactor. Activated by phosphorylation.

The catalysed reaction is alpha-D-glucosamine 1-phosphate = D-glucosamine 6-phosphate. Its function is as follows. Catalyzes the conversion of glucosamine-6-phosphate to glucosamine-1-phosphate. The chain is Phosphoglucosamine mutase from Bdellovibrio bacteriovorus (strain ATCC 15356 / DSM 50701 / NCIMB 9529 / HD100).